Reading from the N-terminus, the 351-residue chain is Probable inactive tRNA-specific adenosine deaminase-like protein 3 (351 aa).

At M1 the chain carries N-acetylmethionine. Residues 1–26 (MEPAPGLVEQPKCLEAGSPEPEPAPW) are disordered. A CMP/dCMP-type deaminase domain is found at 171–336 (AAMQSHMERA…PDLNHRFQVF (166 aa)). 3 residues coordinate Zn(2+): H223, C291, and C294.

It belongs to the cytidine and deoxycytidylate deaminase family. ADAT3 subfamily. Zn(2+) serves as cofactor.

This is Probable inactive tRNA-specific adenosine deaminase-like protein 3 (ADAT3) from Homo sapiens (Human).